The chain runs to 509 residues: Protein root UVB sensitive 5 (509 aa).

Positions Cys-22–Asp-49 are disordered.

The protein belongs to the RUS1 family.

The chain is Protein root UVB sensitive 5 from Arabidopsis thaliana (Mouse-ear cress).